Consider the following 437-residue polypeptide: Double-stranded RNA-binding protein 3 (437 aa).

The disordered stretch occupies residues 1–22 (MKKKSAPTPLPPETANTSPAPI). DRBM domains follow at residues 35 to 104 (VFKS…EIVK) and 120 to 187 (LCKN…AIQG). 2 stretches are compositionally biased toward basic and acidic residues: residues 288-310 (AKRV…ENQH) and 320-330 (DEARVEQEPSR). Positions 288–331 (AKRVEDEPPRDIEMVQPDKENQHSDAALVQPDDEARVEQEPSRD) are disordered.

Binds double-stranded RNA. The polypeptide is Double-stranded RNA-binding protein 3 (DRB3) (Oryza sativa subsp. japonica (Rice)).